We begin with the raw amino-acid sequence, 297 residues long: Protoheme IX farnesyltransferase 1 (297 aa).

9 consecutive transmembrane segments (helical) span residues 23-43, 45-65, 93-113, 117-137, 145-165, 171-191, 216-236, 241-261, and 277-297; these read VVVL…RAGV, WSVL…AAVV, LPAL…LLAF, LTAW…TGFL, IVIG…AVSG, PLLL…ALAI, LHIL…YAIH, LYLA…WVLY, and IAYL…LLNL.

The protein belongs to the UbiA prenyltransferase family. Protoheme IX farnesyltransferase subfamily.

It is found in the cell inner membrane. It carries out the reaction heme b + (2E,6E)-farnesyl diphosphate + H2O = Fe(II)-heme o + diphosphate. Its pathway is porphyrin-containing compound metabolism; heme O biosynthesis; heme O from protoheme: step 1/1. Its function is as follows. Converts heme B (protoheme IX) to heme O by substitution of the vinyl group on carbon 2 of heme B porphyrin ring with a hydroxyethyl farnesyl side group. This Pseudomonas putida (strain GB-1) protein is Protoheme IX farnesyltransferase 1.